The primary structure comprises 238 residues: Ribonuclease 3 (238 aa).

Residues Arg-11 to Gly-136 enclose the RNase III domain. Glu-49 lines the Mg(2+) pocket. Asp-53 is a catalytic residue. 2 residues coordinate Mg(2+): Asp-122 and Glu-125. The active site involves Glu-125. In terms of domain architecture, DRBM spans Asp-161–Val-230.

Belongs to the ribonuclease III family. Homodimer. Mg(2+) serves as cofactor.

Its subcellular location is the cytoplasm. It catalyses the reaction Endonucleolytic cleavage to 5'-phosphomonoester.. In terms of biological role, digests double-stranded RNA. Involved in the processing of primary rRNA transcript to yield the immediate precursors to the large and small rRNAs (23S and 16S). Processes some mRNAs, and tRNAs when they are encoded in the rRNA operon. Processes pre-crRNA and tracrRNA of type II CRISPR loci if present in the organism. The chain is Ribonuclease 3 from Rhizobium meliloti (strain 1021) (Ensifer meliloti).